A 249-amino-acid polypeptide reads, in one-letter code: 3-deoxy-manno-octulosonate cytidylyltransferase (249 aa).

The protein belongs to the KdsB family.

It is found in the cytoplasm. It catalyses the reaction 3-deoxy-alpha-D-manno-oct-2-ulosonate + CTP = CMP-3-deoxy-beta-D-manno-octulosonate + diphosphate. It functions in the pathway nucleotide-sugar biosynthesis; CMP-3-deoxy-D-manno-octulosonate biosynthesis; CMP-3-deoxy-D-manno-octulosonate from 3-deoxy-D-manno-octulosonate and CTP: step 1/1. Its pathway is bacterial outer membrane biogenesis; lipopolysaccharide biosynthesis. Functionally, activates KDO (a required 8-carbon sugar) for incorporation into bacterial lipopolysaccharide in Gram-negative bacteria. The polypeptide is 3-deoxy-manno-octulosonate cytidylyltransferase (Coxiella burnetii (strain RSA 331 / Henzerling II)).